The chain runs to 368 residues: UDP-N-acetylenolpyruvoylglucosamine reductase (368 aa).

Residues 32–199 (IGGKPRSAVR…LAIELQLLTD (168 aa)) enclose the FAD-binding PCMH-type domain. Arg177 is an active-site residue. The active-site Proton donor is Ser257. The active site involves Glu358.

This sequence belongs to the MurB family. The cofactor is FAD.

The protein resides in the cytoplasm. The catalysed reaction is UDP-N-acetyl-alpha-D-muramate + NADP(+) = UDP-N-acetyl-3-O-(1-carboxyvinyl)-alpha-D-glucosamine + NADPH + H(+). It participates in cell wall biogenesis; peptidoglycan biosynthesis. In terms of biological role, cell wall formation. The polypeptide is UDP-N-acetylenolpyruvoylglucosamine reductase (Corynebacterium glutamicum (strain R)).